Here is a 328-residue protein sequence, read N- to C-terminus: MPLHHLTRFPRLEFIGAPTPLEYLPRLSDYLGREIYIKRDDVTPIAMGGNKLRKLEFLVADALREGADTLITAGAIQSNHVRQTAAVAAKLGLHCVALLENPIGTTAENYLTNGNRLLLDLFNTQIEMCDALTDPDAQLQTLATRIEAQGFRPYVIPVGGSSALGAMGYVESALEIAQQCEEVVGLSSVVVASGSAGTHAGLAVGLEHLMPDVELIGVTVSRSVAEQKPKVIALQQAIAGQLALTATADIHLWDDYFAPGYGVPNDAGMEAVKLLASLEGVLLDPVYTGKAMAGLIDGISQKRFNDDGPILFIHTGGAPALFAYHPHV.

K51 bears the N6-(pyridoxal phosphate)lysine mark.

Belongs to the ACC deaminase/D-cysteine desulfhydrase family. Homodimer. The cofactor is pyridoxal 5'-phosphate.

The catalysed reaction is D-cysteine + H2O = hydrogen sulfide + pyruvate + NH4(+) + H(+). In terms of biological role, catalyzes the alpha,beta-elimination reaction of D-cysteine and of several D-cysteine derivatives. It could be a defense mechanism against D-cysteine. This Salmonella typhimurium (strain LT2 / SGSC1412 / ATCC 700720) protein is D-cysteine desulfhydrase.